We begin with the raw amino-acid sequence, 354 residues long: Methionine import ATP-binding protein MetN (354 aa).

An ABC transporter domain is found at 8–250; sequence LDHIDITFRQ…PKEALTQEFI (243 aa). ATP is bound at residue 42–49; that stretch reads GYSGAGKS.

The protein belongs to the ABC transporter superfamily. Methionine importer (TC 3.A.1.24) family. As to quaternary structure, the complex is composed of two ATP-binding proteins (MetN), two transmembrane proteins (MetI) and a solute-binding protein (MetQ).

It localises to the cell membrane. The enzyme catalyses L-methionine(out) + ATP + H2O = L-methionine(in) + ADP + phosphate + H(+). It carries out the reaction D-methionine(out) + ATP + H2O = D-methionine(in) + ADP + phosphate + H(+). Part of the ABC transporter complex MetNIQ involved in methionine import. Responsible for energy coupling to the transport system. This is Methionine import ATP-binding protein MetN from Streptococcus pyogenes serotype M3 (strain ATCC BAA-595 / MGAS315).